The chain runs to 1155 residues: Agglutinin-like protein 3 (1155 aa).

The signal sequence occupies residues 1 to 17 (MLQQYTLLLIYLSVATA). Intrachain disulfides connect C73–C150, C96–C112, C205–C298, and C227–C256. ALS repeat units lie at residues 365–396 (TTIT…VDIP), 401–432 (TTVT…VQVP), and 438–469 (VTTT…IREP). N471 carries an N-linked (GlcNAc...) asparagine glycan. ALS repeat units lie at residues 474–505 (VTTT…IKEP) and 510–541 (VTTT…IREP). N543 is a glycosylation site (N-linked (GlcNAc...) asparagine). ALS repeat units follow at residues 546-577 (VTTT…IREP) and 582-613 (VTTT…IREP). N615 is a glycosylation site (N-linked (GlcNAc...) asparagine). The stretch at 618-649 (VTTTEYWSQSYATTTTITAPPGETDTVLIREP) is one ALS 8 repeat. N651 carries an N-linked (GlcNAc...) asparagine glycan. ALS repeat units follow at residues 654-685 (VTTT…IKEP) and 690-721 (VTTT…IREP). The N-linked (GlcNAc...) asparagine glycan is linked to N723. An ALS 11 repeat occupies 726-757 (VTTTEYWSQSYATTTTITAPPGETDTVLIREP). Residue N759 is glycosylated (N-linked (GlcNAc...) asparagine). The stretch at 762 to 793 (VTTTEYWSQSFATTTTVTAPPGGTDTVIIREP) is one ALS 12 repeat. An N-linked (GlcNAc...) asparagine glycan is attached at N795. ALS repeat units follow at residues 798 to 829 (VTTT…IREP) and 834 to 863 (VTTT…VIIY). N-linked (GlcNAc...) asparagine glycosylation is present at N881. Residues 936–1115 (TTTESTLQSP…NSDTQQTTLS (180 aa)) form a disordered region. The span at 949 to 965 (FSESGVSVETESSTFTT) shows a compositional bias: low complexity. Residues 966–977 (AQTNPSVPTTES) are compositionally biased toward polar residues. Residues 1010–1019 (TTSTAASTST) show a composition bias toward low complexity. N1023 carries N-linked (GlcNAc...) asparagine glycosylation. Low complexity-rich tracts occupy residues 1034–1058 (ASSP…STSV) and 1071–1115 (APSA…TTLS). Residue N1099 is glycosylated (N-linked (GlcNAc...) asparagine). S1134 carries the GPI-anchor amidated serine lipid modification. Residues 1135-1155 (GSVIQHSTWLCGLITLLSLFI) constitute a propeptide, removed in mature form.

This sequence belongs to the ALS family. In terms of processing, the GPI-anchor is attached to the protein in the endoplasmic reticulum and serves to target the protein to the cell surface. There, the glucosamine-inositol phospholipid moiety is cleaved off and the GPI-modified mannoprotein is covalently attached via its lipidless GPI glycan remnant to the 1,6-beta-glucan of the outer cell wall layer.

The protein localises to the cell membrane. It is found in the secreted. Its subcellular location is the cell wall. Functionally, cell surface adhesion protein which mediates both yeast-to-host tissue adherence and yeast aggregation. Plays an important role in the biofilm formation and pathogenesis of C.albicans infections. Necessary for C.albicans to bind to N-cadherin on endothelial cells and E-cadherin on oral epithelial cells and subsequent endocytosis by these cells. During disseminated infection, mediates initial trafficking to the brain and renal cortex and contributes to fungal persistence in the kidneys. The sequence is that of Agglutinin-like protein 3 (ALS3) from Candida albicans (strain SC5314 / ATCC MYA-2876) (Yeast).